Here is a 195-residue protein sequence, read N- to C-terminus: 3-isopropylmalate dehydratase small subunit (195 aa).

This sequence belongs to the LeuD family. LeuD type 1 subfamily. Heterodimer of LeuC and LeuD.

The enzyme catalyses (2R,3S)-3-isopropylmalate = (2S)-2-isopropylmalate. Its pathway is amino-acid biosynthesis; L-leucine biosynthesis; L-leucine from 3-methyl-2-oxobutanoate: step 2/4. Its function is as follows. Catalyzes the isomerization between 2-isopropylmalate and 3-isopropylmalate, via the formation of 2-isopropylmaleate. The sequence is that of 3-isopropylmalate dehydratase small subunit from Frankia alni (strain DSM 45986 / CECT 9034 / ACN14a).